The following is a 136-amino-acid chain: Large ribosomal subunit protein uL16 (136 aa).

It belongs to the universal ribosomal protein uL16 family. Part of the 50S ribosomal subunit.

Binds 23S rRNA and is also seen to make contacts with the A and possibly P site tRNAs. The chain is Large ribosomal subunit protein uL16 from Rickettsia rickettsii (strain Iowa).